We begin with the raw amino-acid sequence, 75 residues long: UPF0270 protein PSEEN1465 (75 aa).

The protein belongs to the UPF0270 family.

This Pseudomonas entomophila (strain L48) protein is UPF0270 protein PSEEN1465.